The sequence spans 245 residues: Uridylate kinase (245 aa).

15–18 (KLSG) contacts ATP. The involved in allosteric activation by GTP stretch occupies residues 23 to 28 (GDEGFG). Gly-57 provides a ligand contact to UMP. 2 residues coordinate ATP: Gly-58 and Arg-62. UMP-binding positions include Asp-77 and 138–145 (TGNPFCTT). Residues Thr-165, Tyr-171, and Asp-174 each coordinate ATP.

This sequence belongs to the UMP kinase family. As to quaternary structure, homohexamer.

It localises to the cytoplasm. The catalysed reaction is UMP + ATP = UDP + ADP. It functions in the pathway pyrimidine metabolism; CTP biosynthesis via de novo pathway; UDP from UMP (UMPK route): step 1/1. With respect to regulation, allosterically activated by GTP. Inhibited by UTP. Functionally, catalyzes the reversible phosphorylation of UMP to UDP. This Shewanella sp. (strain W3-18-1) protein is Uridylate kinase.